Consider the following 336-residue polypeptide: Protein FPV127 (336 aa).

The tract at residues 1–22 (MGGGLVLPTRDPPKEQDTSETA) is disordered.

This sequence belongs to the poxviruses A16/G9/J5 family.

The sequence is that of Protein FPV127 from Vertebrata (FPV).